A 422-amino-acid chain; its full sequence is Adenylosuccinate synthetase (422 aa).

Residues 11–17 and 39–41 contribute to the GTP site; these read GDEGKGK and GHT. Asp-12 functions as the Proton acceptor in the catalytic mechanism. The Mg(2+) site is built by Asp-12 and Gly-39. Residues 12-15, 37-40, Thr-129, Arg-143, Asn-219, Thr-234, and Arg-298 each bind IMP; these read DEGK and NAGH. His-40 (proton donor) is an active-site residue. 294–300 provides a ligand contact to substrate; the sequence is VTTGRKR. GTP is bound by residues Arg-300, 326-328, and 411-413; these read KLD and GTG.

This sequence belongs to the adenylosuccinate synthetase family. In terms of assembly, homodimer. Requires Mg(2+) as cofactor.

Its subcellular location is the cytoplasm. It catalyses the reaction IMP + L-aspartate + GTP = N(6)-(1,2-dicarboxyethyl)-AMP + GDP + phosphate + 2 H(+). The protein operates within purine metabolism; AMP biosynthesis via de novo pathway; AMP from IMP: step 1/2. Functionally, plays an important role in the de novo pathway and in the salvage pathway of purine nucleotide biosynthesis. Catalyzes the first committed step in the biosynthesis of AMP from IMP. The protein is Adenylosuccinate synthetase of Talaromyces marneffei (strain ATCC 18224 / CBS 334.59 / QM 7333) (Penicillium marneffei).